We begin with the raw amino-acid sequence, 282 residues long: Bis(5'-nucleosyl)-tetraphosphatase, symmetrical (282 aa).

This sequence belongs to the Ap4A hydrolase family.

The enzyme catalyses P(1),P(4)-bis(5'-adenosyl) tetraphosphate + H2O = 2 ADP + 2 H(+). Its function is as follows. Hydrolyzes diadenosine 5',5'''-P1,P4-tetraphosphate to yield ADP. This chain is Bis(5'-nucleosyl)-tetraphosphatase, symmetrical, found in Salmonella paratyphi A (strain ATCC 9150 / SARB42).